The chain runs to 293 residues: Methylsterol monooxygenase 1 (293 aa).

A run of 2 helical transmembrane segments spans residues 55–75 (LIVH…FQFI) and 100–120 (VLLF…YYFT). Positions 145-274 (CAVIEDTWHY…FTWWDRIFGT (130 aa)) constitute a Fatty acid hydroxylase domain. The Histidine box-1 signature appears at 157 to 161 (HRLLH). The Histidine box-2 motif lies at 170–174 (HKVHH). Residues 199–219 (FFIGIVLLCDHVILLWAWVTI) form a helical membrane-spanning segment. Positions 249–255 (HHDFHHM) match the Histidine box-3 motif.

This sequence belongs to the sterol desaturase family. It depends on Fe cation as a cofactor. In terms of processing, ubiquitinated by MARCHF6, leading to proteasomal degradation.

It is found in the endoplasmic reticulum membrane. It carries out the reaction 4,4-dimethyl-5alpha-cholest-7-en-3beta-ol + 6 Fe(II)-[cytochrome b5] + 3 O2 + 5 H(+) = 4alpha-carboxy-4beta-methyl-5alpha-cholest-7-ene-3beta-ol + 6 Fe(III)-[cytochrome b5] + 4 H2O. The enzyme catalyses 4,4-dimethyl-5alpha-cholesta-8,24-dien-3beta-ol + 6 Fe(II)-[cytochrome b5] + 3 O2 + 5 H(+) = 4beta-methylzymosterol-4alpha-carboxylate + 6 Fe(III)-[cytochrome b5] + 4 H2O. The catalysed reaction is 4alpha-methylzymosterol + 6 Fe(II)-[cytochrome b5] + 3 O2 + 5 H(+) = 4alpha-carboxyzymosterol + 6 Fe(III)-[cytochrome b5] + 4 H2O. It catalyses the reaction 4alpha-methyl-5alpha-cholest-7-en-3beta-ol + 6 Fe(II)-[cytochrome b5] + 3 O2 + 5 H(+) = 4alpha-carboxy-5alpha-cholest-7-en-3beta-ol + 6 Fe(III)-[cytochrome b5] + 4 H2O. It carries out the reaction 4,4-dimethyl-5alpha-cholest-8-en-3beta-ol + 6 Fe(II)-[cytochrome b5] + 3 O2 + 5 H(+) = 4alpha-carboxy-4beta-methyl-5alpha-cholest-8-en-3beta-ol + 6 Fe(III)-[cytochrome b5] + 4 H2O. The enzyme catalyses 4alpha-methyl-5alpha-cholest-8-en-3beta-ol + 6 Fe(II)-[cytochrome b5] + 3 O2 + 5 H(+) = 4alpha-carboxy-5alpha-cholest-8-ene-3beta-ol + 6 Fe(III)-[cytochrome b5] + 4 H2O. The protein operates within steroid biosynthesis; zymosterol biosynthesis; zymosterol from lanosterol: step 3/6. It functions in the pathway steroid biosynthesis; cholesterol biosynthesis. Its function is as follows. Catalyzes the three-step monooxygenation required for the demethylation of 4,4-dimethyl and 4alpha-methylsterols, which can be subsequently metabolized to cholesterol. This is Methylsterol monooxygenase 1 (MSMO1) from Macaca fascicularis (Crab-eating macaque).